The primary structure comprises 476 residues: MLPKFRSRSSIIKNTERISNILSGGKLTVCGSKLGGLYTFEKCTFNKYYSSSQYQHTGRPVGGNIHSSSNQQRQKNSEAPRINEIPPSTSSVEKSTTIPNSSVVLDHLLNEGENTLEEVKPSEIHPHMSWSSKSEGKMFKIPEELLNKLNGFGALEKQKKSFSFFTSASLLHRKITTELVNVLQRSKDQGTKDGRFLLDGAPGSGRSIALIQAELFALSQPNFIVLPVHNCEGWVNSTSSYGYDEQLKLWVQPDLIKGFLTSVMKTNSDKLKKLKTFESHELLQNECIPAGTDLLSFLHKLIASSNAPKSLEIFLQELNNNTKSNSNMKVLLVIDNISILSVVTKYKDKKNNFLPPKDFYFINLLFKYISGSLTFNRGTVLAATSSQPRVSTPSLDIALGVAHRNPYKSSDETILDSLQSVHILNMEPYTLDESRRMMEYLVSSNVCLEKVDNYLQNHVLSGGNPRKFFDACTRLA.

The transit peptide at 1–54 (MLPKFRSRSSIIKNTERISNILSGGKLTVCGSKLGGLYTFEKCTFNKYYSSSQY) directs the protein to the mitochondrion. The segment at 58–97 (GRPVGGNIHSSSNQQRQKNSEAPRINEIPPSTSSVEKSTT) is disordered. Polar residues-rich tracts occupy residues 65-74 (IHSSSNQQRQ) and 86-97 (PPSTSSVEKSTT). 200 to 207 (GAPGSGRS) lines the ATP pocket.

It belongs to the mitochondrion-specific ribosomal protein mS29 family. In terms of assembly, component of the mitochondrial small ribosomal subunit (mt-SSU). Mature yeast 74S mitochondrial ribosomes consist of a small (37S) and a large (54S) subunit. The 37S small subunit contains a 15S ribosomal RNA (15S mt-rRNA) and at least 32 different proteins. The 54S large subunit contains a 21S rRNA (21S mt-rRNA) and at least 45 different proteins.

The protein resides in the mitochondrion. Functionally, component of the mitochondrial ribosome (mitoribosome), a dedicated translation machinery responsible for the synthesis of mitochondrial genome-encoded proteins, including at least some of the essential transmembrane subunits of the mitochondrial respiratory chain. The mitoribosomes are attached to the mitochondrial inner membrane and translation products are cotranslationally integrated into the membrane. mS29 binds GTP and is probably an active GTPase. GTP hydrolysis may be linked to subunit association. mS29 also has an extraribosomal function, being required for maintenance of mitochondrial DNA. The polypeptide is Small ribosomal subunit protein mS29 (rsm23) (Schizosaccharomyces pombe (strain 972 / ATCC 24843) (Fission yeast)).